The chain runs to 346 residues: MGYEILGLPMAYYIAMVLKVLVVFVFVLLTVAYATYAERKIIGHMQVRLGPMRTGWHGLLQPIADGVKLFFKEEIIPSKADKFAFLIAPLIALVPAFIGFAVIPFGETIEVGGYKIPLQIAAYYDTASGQVVDLNVGVLYILALASIGVYGIVLAGWSSNSKYSLLGGLRSSAQMISYELAAGLAIISVFMLSESLSLQKIVADQANGAWYAFKQPLAFILFFICSIAEINRTPFDLPEAETELVSGFCTEYSSMKYAMFFMAEYANMVTVCAVTTTLFLGGWHGPSFLPGWFWFIAKVYFLIFTCMWIRATYPRYRYDQLMRLGWKVFLPLTLINIVVTGIIVSL.

Helical transmembrane passes span 14-34, 83-103, 136-156, 172-192, 208-228, 260-280, 289-309, and 324-344; these read IAMVLKVLVVFVFVLLTVAYA, FAFLIAPLIALVPAFIGFAVI, VGVLYILALASIGVYGIVLAG, SAQMISYELAAGLAIISVFML, GAWYAFKQPLAFILFFICSIA, FFMAEYANMVTVCAVTTTLFL, LPGWFWFIAKVYFLIFTCMWI, and LGWKVFLPLTLINIVVTGIIV.

Belongs to the complex I subunit 1 family. In terms of assembly, NDH-1 is composed of 14 different subunits. Subunits NuoA, H, J, K, L, M, N constitute the membrane sector of the complex.

It is found in the cell inner membrane. The enzyme catalyses a quinone + NADH + 5 H(+)(in) = a quinol + NAD(+) + 4 H(+)(out). In terms of biological role, NDH-1 shuttles electrons from NADH, via FMN and iron-sulfur (Fe-S) centers, to quinones in the respiratory chain. The immediate electron acceptor for the enzyme in this species is believed to be ubiquinone. Couples the redox reaction to proton translocation (for every two electrons transferred, four hydrogen ions are translocated across the cytoplasmic membrane), and thus conserves the redox energy in a proton gradient. This subunit may bind ubiquinone. The sequence is that of NADH-quinone oxidoreductase subunit H 2 from Geobacter metallireducens (strain ATCC 53774 / DSM 7210 / GS-15).